Reading from the N-terminus, the 549-residue chain is Probable amidase (549 aa).

Active-site charge relay system residues include Lys-132 and Ser-209. The Acyl-ester intermediate role is filled by Ser-233.

Belongs to the amidase family.

The enzyme catalyses a monocarboxylic acid amide + H2O = a monocarboxylate + NH4(+). This Saccharomyces cerevisiae (strain ATCC 204508 / S288c) (Baker's yeast) protein is Probable amidase (AMD2).